Reading from the N-terminus, the 136-residue chain is Ribosome-binding factor A (136 aa).

This sequence belongs to the RbfA family. In terms of assembly, monomer. Binds 30S ribosomal subunits, but not 50S ribosomal subunits or 70S ribosomes.

The protein localises to the cytoplasm. In terms of biological role, one of several proteins that assist in the late maturation steps of the functional core of the 30S ribosomal subunit. Associates with free 30S ribosomal subunits (but not with 30S subunits that are part of 70S ribosomes or polysomes). Required for efficient processing of 16S rRNA. May interact with the 5'-terminal helix region of 16S rRNA. The chain is Ribosome-binding factor A from Yersinia pestis bv. Antiqua (strain Antiqua).